The chain runs to 287 residues: Probable endonuclease 4 (287 aa).

Zn(2+)-binding residues include His69, His109, Glu144, Asp178, His181, His215, Asp228, His230, and Glu260.

Belongs to the AP endonuclease 2 family. Requires Zn(2+) as cofactor.

The enzyme catalyses Endonucleolytic cleavage to 5'-phosphooligonucleotide end-products.. Functionally, endonuclease IV plays a role in DNA repair. It cleaves phosphodiester bonds at apurinic or apyrimidinic (AP) sites, generating a 3'-hydroxyl group and a 5'-terminal sugar phosphate. The chain is Probable endonuclease 4 from Thermotoga sp. (strain RQ2).